A 185-amino-acid chain; its full sequence is Mu-like prophage FluMu protein gp16 (185 aa).

It to phage Mu protein gp16.

This is Mu-like prophage FluMu protein gp16 from Haemophilus influenzae (strain ATCC 51907 / DSM 11121 / KW20 / Rd).